The sequence spans 316 residues: uncharacterized protein (316 aa).

Residues 1-70 lie on the Cytoplasmic side of the membrane; sequence SFAYSGNSES…NNDEIGIWNY (70 aa). A helical membrane pass occupies residues 71-91; that stretch reads ISVAEMGGVLLFLSYWIWTCL. A topological domain (lumenal) is located at residue histidine 92. The chain crosses the membrane as a helical span at residues 93 to 113; the sequence is FSKIIFPAQKVICLYIFLFAL. At 114–170 the chain is on the cytoplasmic side; the sequence is NQTLQECIEEYVFSSECIKYRQFYSVYEIIDFLRTNFYRLFVIYCALGFGITRTVPK. A helical membrane pass occupies residues 171–191; that stretch reads YLMIKGISIVIALCSVYWISL. Over 192–194 the chain is Lumenal; it reads YKD. A helical transmembrane segment spans residues 195 to 215; the sequence is VYVVSEIFDMIQYEVSPAIWV. Residues 216–245 are Cytoplasmic-facing; sequence YSICHLLKQCTSVTTYENASKARFFRRMLN. A helical membrane pass occupies residues 246–266; sequence AFIFIFCASPMLHYLSNIIFG. Over 267 to 316 the chain is Lumenal; that stretch reads NFDYRLSVIIGDLFTFMEKIAFPCYIMFPTHNEALAYNRNVAEEAQEKMI.

It belongs to the UPF0742 family.

Its subcellular location is the endoplasmic reticulum. It is found in the membrane. This is an uncharacterized protein from Schizosaccharomyces pombe (strain 972 / ATCC 24843) (Fission yeast).